Reading from the N-terminus, the 334-residue chain is Coiled-coil domain-containing protein 89 (334 aa).

Residues 75-318 (EAAQRFQSER…EAYKKHSGDL (244 aa)) are a coiled coil.

This sequence belongs to the CCDC89 family. Interacts (via C-terminus) with hey1/bc8 (via Orange domain). In terms of tissue distribution, in adults, expressed at varying levels in different organs including the liver and brain, with highest expression in the testis.

Its subcellular location is the cytoplasm. The protein localises to the nucleus. This Xenopus laevis (African clawed frog) protein is Coiled-coil domain-containing protein 89.